Reading from the N-terminus, the 312-residue chain is GDP-L-fucose synthase (312 aa).

Gly-11 to Gly-17 serves as a coordination point for NADP(+). Residue Tyr-136 is the Proton donor/acceptor of the active site. Lys-140 and His-179 together coordinate NADP(+). The substrate site is built by Lys-187, Trp-202, and Arg-209.

The protein belongs to the NAD(P)-dependent epimerase/dehydratase family. Fucose synthase subfamily.

The catalysed reaction is GDP-beta-L-fucose + NADP(+) = GDP-4-dehydro-alpha-D-rhamnose + NADPH + H(+). It functions in the pathway nucleotide-sugar biosynthesis; GDP-L-fucose biosynthesis via de novo pathway; GDP-L-fucose from GDP-alpha-D-mannose: step 2/2. Catalyzes the two-step NADP-dependent conversion of GDP-4-dehydro-6-deoxy-D-mannose to GDP-fucose, involving an epimerase and a reductase reaction. This chain is GDP-L-fucose synthase, found in Azorhizobium caulinodans (strain ATCC 43989 / DSM 5975 / JCM 20966 / LMG 6465 / NBRC 14845 / NCIMB 13405 / ORS 571).